A 565-amino-acid polypeptide reads, in one-letter code: Hemagglutinin-neuraminidase (565 aa).

The Intravirion segment spans residues Met-1–Thr-20. A helical transmembrane segment spans residues Leu-21 to Ile-41. Residues Gln-42 to Ser-565 are Virion surface-facing. Residues Asn-110 and Asn-139 are each glycosylated (N-linked (GlcNAc...) asparagine; by host). 3 cysteine pairs are disulfide-bonded: Cys-161/Cys-185, Cys-175/Cys-236, and Cys-227/Cys-240. Residues Asn-223–Ser-228 form an involved in neuraminidase activity region. Asn-267 carries an N-linked (GlcNAc...) asparagine; by host glycan. Disulfide bonds link Cys-333–Cys-454, Cys-365–Cys-375, and Cys-448–Cys-458. N-linked (GlcNAc...) asparagine; by host glycosylation is present at Asn-504. The cysteines at positions 528 and 539 are disulfide-linked.

The protein belongs to the paramyxoviruses hemagglutinin-neuraminidase family. Homotetramer; composed of disulfide-linked homodimers. Interacts with F protein trimer.

The protein localises to the virion membrane. It localises to the host cell membrane. It catalyses the reaction Hydrolysis of alpha-(2-&gt;3)-, alpha-(2-&gt;6)-, alpha-(2-&gt;8)- glycosidic linkages of terminal sialic acid residues in oligosaccharides, glycoproteins, glycolipids, colominic acid and synthetic substrates.. Attaches the virus to sialic acid-containing cell receptors and thereby initiating infection. Binding of HN protein to the receptor induces a conformational change that allows the F protein to trigger virion/cell membranes fusion. Functionally, neuraminidase activity ensures the efficient spread of the virus by dissociating the mature virions from the neuraminic acid containing glycoproteins. The sequence is that of Hemagglutinin-neuraminidase (HN) from Parainfluenza virus 5 (isolate Canine/CPI-) (PIV5).